The primary structure comprises 331 residues: ADP-L-glycero-D-manno-heptose-6-epimerase (331 aa).

Residues phenylalanine 11–isoleucine 12, aspartate 32–asparagine 33, lysine 39, lysine 54, glutamate 75–serine 79, and asparagine 92 contribute to the NADP(+) site. Tyrosine 139 serves as the catalytic Proton acceptor. Lysine 143 serves as a coordination point for NADP(+). Substrate is bound at residue asparagine 168. 2 residues coordinate NADP(+): valine 169 and lysine 177. The active-site Proton acceptor is the lysine 177. Substrate-binding positions include arginine 179, histidine 186, phenylalanine 200–tyrosine 203, arginine 213, and tyrosine 292.

Belongs to the NAD(P)-dependent epimerase/dehydratase family. HldD subfamily. In terms of assembly, homopentamer. The cofactor is NADP(+).

It carries out the reaction ADP-D-glycero-beta-D-manno-heptose = ADP-L-glycero-beta-D-manno-heptose. It participates in nucleotide-sugar biosynthesis; ADP-L-glycero-beta-D-manno-heptose biosynthesis; ADP-L-glycero-beta-D-manno-heptose from D-glycero-beta-D-manno-heptose 7-phosphate: step 4/4. Catalyzes the interconversion between ADP-D-glycero-beta-D-manno-heptose and ADP-L-glycero-beta-D-manno-heptose via an epimerization at carbon 6 of the heptose. In Ralstonia nicotianae (strain ATCC BAA-1114 / GMI1000) (Ralstonia solanacearum), this protein is ADP-L-glycero-D-manno-heptose-6-epimerase.